The sequence spans 72 residues: Translation initiation factor IF-1 (72 aa).

Positions 1–72 constitute an S1-like domain; that stretch reads MSKEDSFEME…SKGRITYRAR (72 aa).

The protein belongs to the IF-1 family. In terms of assembly, component of the 30S ribosomal translation pre-initiation complex which assembles on the 30S ribosome in the order IF-2 and IF-3, IF-1 and N-formylmethionyl-tRNA(fMet); mRNA recruitment can occur at any time during PIC assembly.

The protein resides in the cytoplasm. Its function is as follows. One of the essential components for the initiation of protein synthesis. Stabilizes the binding of IF-2 and IF-3 on the 30S subunit to which N-formylmethionyl-tRNA(fMet) subsequently binds. Helps modulate mRNA selection, yielding the 30S pre-initiation complex (PIC). Upon addition of the 50S ribosomal subunit IF-1, IF-2 and IF-3 are released leaving the mature 70S translation initiation complex. This is Translation initiation factor IF-1 from Pseudomonas savastanoi pv. phaseolicola (strain 1448A / Race 6) (Pseudomonas syringae pv. phaseolicola (strain 1448A / Race 6)).